The chain runs to 508 residues: Photosystem II CP47 reaction center protein (508 aa).

6 helical membrane passes run 21 to 36, 101 to 115, 140 to 156, 203 to 218, 237 to 252, and 457 to 472; these read AVHI…WAGS, IVFS…IWHW, GIHL…FGAF, IAAG…FHLS, VLSS…AFVV, and SFAL…HGAR.

Belongs to the PsbB/PsbC family. PsbB subfamily. In terms of assembly, PSII is composed of 1 copy each of membrane proteins PsbA, PsbB, PsbC, PsbD, PsbE, PsbF, PsbH, PsbI, PsbJ, PsbK, PsbL, PsbM, PsbT, PsbX, PsbY, PsbZ, Psb30/Ycf12, at least 3 peripheral proteins of the oxygen-evolving complex and a large number of cofactors. It forms dimeric complexes. Binds multiple chlorophylls. PSII binds additional chlorophylls, carotenoids and specific lipids. serves as cofactor.

The protein resides in the plastid. The protein localises to the chloroplast thylakoid membrane. Its function is as follows. One of the components of the core complex of photosystem II (PSII). It binds chlorophyll and helps catalyze the primary light-induced photochemical processes of PSII. PSII is a light-driven water:plastoquinone oxidoreductase, using light energy to abstract electrons from H(2)O, generating O(2) and a proton gradient subsequently used for ATP formation. The protein is Photosystem II CP47 reaction center protein of Trachelium caeruleum (Blue throatwort).